The following is a 44-amino-acid chain: Small ribosomal subunit protein eS31 (44 aa).

Cys-18, Cys-21, Cys-35, and Cys-38 together coordinate Zn(2+). A C4-type zinc finger spans residues 18 to 38 (CPRCGDTVLAEHEDRQHCGKC).

This sequence belongs to the eukaryotic ribosomal protein eS31 family. Part of the 30S ribosomal subunit. Zn(2+) serves as cofactor.

The polypeptide is Small ribosomal subunit protein eS31 (Haloarcula marismortui (strain ATCC 43049 / DSM 3752 / JCM 8966 / VKM B-1809) (Halobacterium marismortui)).